Consider the following 189-residue polypeptide: Large ribosomal subunit protein bL9 (189 aa).

The protein belongs to the bacterial ribosomal protein bL9 family.

Binds to the 23S rRNA. This is Large ribosomal subunit protein bL9 from Cereibacter sphaeroides (strain KD131 / KCTC 12085) (Rhodobacter sphaeroides).